The sequence spans 196 residues: MTLQCTKSAGPWKMVVWDEDGFQGRRHEFTAECPSVLELGFETVRSLKVLSGAWVGFEHAGFQGQQYILERGEYPSWDAWGGNTAYPAERLTSFRPAACANHRDSRLTIFEQENFLGKKGELSDDYPSLQAMGWEGNEVGSFHVHSGAWVCSQFPGYRGFQYVLECDHHSGDYKHFREWGSHAPTFQVQSIRRIQQ.

The residue at position 2 (threonine 2) is an N-acetylthreonine. The interval threonine 2 to proline 11 is N-terminal arm. 2 consecutive Beta/gamma crystallin 'Greek key' domains span residues tryptophan 12–serine 51 and glycine 52–alanine 98. Residues cysteine 99–aspartate 104 form a connecting peptide region. 2 Beta/gamma crystallin 'Greek key' domains span residues serine 105–serine 146 and glycine 147–glutamine 195.

It belongs to the beta/gamma-crystallin family. In terms of assembly, homo/heterodimer, or complexes of higher-order. The structure of beta-crystallin oligomers seems to be stabilized through interactions between the N-terminal arms.

Functionally, crystallins are the dominant structural components of the vertebrate eye lens. This is Beta-crystallin A4 (CRYBA4) from Homo sapiens (Human).